The sequence spans 315 residues: Bifunctional pinoresinol-lariciresinol reductase (315 aa).

NADP(+) is bound by residues 14-20 (GGTGYLG), Arg-39, and Lys-48. The active-site Proton acceptor is Lys-142. NADP(+) is bound at residue Arg-146. A substrate-binding site is contributed by His-274.

This sequence belongs to the NmrA-type oxidoreductase family. Isoflavone reductase subfamily. As to quaternary structure, dimer.

It catalyses the reaction (+)-lariciresinol + NADP(+) = (+)-pinoresinol + NADPH + H(+). The enzyme catalyses (-)-secoisolariciresinol + NADP(+) = (+)-lariciresinol + NADPH + H(+). Its function is as follows. Reductase involved in lignan (-)-hinokinin biosynthesis. Catalyzes the enantioselective conversion of (+)-pinoresinol into (+)-lariciresinol and of (+)-lariciresinol into (-)-secoisolariciresinol. Abstracts the 4R-hydride from the NADPH cofactor during catalysis. Has also a low phenylcoumaran benzylic ether reductase activity. This Linum corymbulosum (Linum) protein is Bifunctional pinoresinol-lariciresinol reductase (PLR_Lc1).